Consider the following 234-residue polypeptide: Purine nucleoside phosphorylase DeoD-type (234 aa).

Position 4 (His4) interacts with a purine D-ribonucleoside. Phosphate is bound by residues Gly20, Arg24, Arg43, and 87-90 (RVGT). A purine D-ribonucleoside is bound by residues 179 to 181 (EME) and 203 to 204 (SN).

Belongs to the PNP/UDP phosphorylase family. As to quaternary structure, homohexamer; trimer of homodimers.

It catalyses the reaction a purine D-ribonucleoside + phosphate = a purine nucleobase + alpha-D-ribose 1-phosphate. The enzyme catalyses a purine 2'-deoxy-D-ribonucleoside + phosphate = a purine nucleobase + 2-deoxy-alpha-D-ribose 1-phosphate. Functionally, catalyzes the reversible phosphorolytic breakdown of the N-glycosidic bond in the beta-(deoxy)ribonucleoside molecules, with the formation of the corresponding free purine bases and pentose-1-phosphate. The chain is Purine nucleoside phosphorylase DeoD-type from Latilactobacillus sakei subsp. sakei (strain 23K) (Lactobacillus sakei subsp. sakei).